The following is a 483-amino-acid chain: Pre-glycoprotein polyprotein GP complex (483 aa).

A lipid anchor (N-myristoyl glycine; by host) is attached at Gly2. Residues 2-17 (GQLVSFIGEIPAIVHE) lie on the Extracellular side of the membrane. The chain crosses the membrane as a helical span at residues 18 to 32 (ALNVALIAVSIIAIM). Lys33 is a topological domain (cytoplasmic). The chain crosses the membrane as a helical span at residues 34-53 (GLINIWKSGLFQLIMFLILA). Extracellular-side segments run 54 to 58 (GRSCS) and 59 to 422 (ISIG…SLVD). Cys57 serves as a coordination point for Zn(2+). Asn73, Asn88, Asn130, and Asn179 each carry an N-linked (GlcNAc...) asparagine; by host glycan. 5 disulfide bridges follow: Cys85/Cys223, Cys186/Cys204, Cys269/Cys282, Cys291/Cys300, and Cys354/Cys375. N-linked (GlcNAc...) asparagine; by host glycosylation is present at Asn216. 4 N-linked (GlcNAc...) asparagine; by host glycosylation sites follow: Asn355, Asn363, Asn380, and Asn385. The chain crosses the membrane as a helical span at residues 423–443 (LCFWSTLFYTASIFLHLLHIP). The Cytoplasmic segment spans residues 444 to 483 (THRHIIGEGCPKPHRLTSDSLCACGFFQLKGRPTRWARIP). Zn(2+)-binding residues include His445, His447, Cys453, His457, Cys465, and Cys467.

It belongs to the arenaviridae GPC protein family. As to quaternary structure, homotetramer; disulfide-linked. Homotetramer. GP2 homotetramers bind through ionic interactions with GP1 homotetramers to form the GP complex together with the stable signal peptide. The GP-C polyprotein interacts with the host protease MBTPS1/SKI-1 resulting in the polyprotein processing. Specific enzymatic cleavages in vivo yield mature proteins. GP-C polyprotein is cleaved in the endoplasmic reticulum by the host protease MBTPS1. Only cleaved glycoprotein is incorporated into virions. Post-translationally, the SSP remains stably associated with the GP complex following cleavage by signal peptidase and plays crucial roles in the trafficking of GP through the secretory pathway. In terms of processing, myristoylation is necessary for GP2-mediated fusion activity.

It is found in the virion membrane. Its subcellular location is the host endoplasmic reticulum membrane. The protein localises to the host Golgi apparatus membrane. The protein resides in the host cell membrane. Functionally, class I viral fusion protein that directs fusion of viral and host endosomal membranes, leading to delivery of the nucleocapsid into the cytoplasm. Membrane fusion is mediated by irreversible conformational changes induced upon acidification in the endosome. Its function is as follows. Stable signal peptide (SSP): cleaved and functions as a signal peptide. In addition, it is also retained as the third component of the GP complex. The SSP is required for efficient glycoprotein expression, post-translational maturation cleavage of GP1 and GP2, glycoprotein transport to the cell surface plasma membrane, formation of infectious virus particles, and acid pH-dependent glycoprotein-mediated cell fusion. In terms of biological role, interacts with the host receptor. The polypeptide is Pre-glycoprotein polyprotein GP complex (Peromyscus californicus (California mouse)).